Here is a 248-residue protein sequence, read N- to C-terminus: Mannose-binding protein C (248 aa).

The signal sequence occupies residues 1 to 20; it reads MSLFPSLPLLLLSMVAASYS. Residues 42-99 form the Collagen-like domain; sequence GINGFPGKDGRDGTKGEKGEPGQGLRGLQGPPGKLGPPGNPGPSGSPGPKGQKGDPGK. Residues 43–113 are disordered; that stretch reads INGFPGKDGR…DSSLAASERK (71 aa). A 4-hydroxyproline modification is found at Pro-47. Over residues 49–61 the composition is skewed to basic and acidic residues; the sequence is KDGRDGTKGEKGE. Pro-73, Pro-79, Pro-82, and Pro-88 each carry 4-hydroxyproline. The segment covering 75–87 has biased composition (pro residues); it reads KLGPPGNPGPSGS. Residues 93-102 are compositionally biased toward basic and acidic residues; that stretch reads QKGDPGKSPD. Residues 112–130 are a coiled coil; it reads RKALQTEMARIKKWLTFSL. The region spanning 134 to 245 is the C-type lectin domain; it reads VGNKFFLTNG…CSTSHLAVCE (112 aa). Disulfide bonds link Cys-155–Cys-244 and Cys-222–Cys-236.

In terms of assembly, oligomeric complex of 3 or more homotrimers. Interacts with MASP1 and MASP2. Interacts with MEP1A and MEP1B and may inhibit their catalytic activity. In terms of processing, hydroxylation on proline residues within the sequence motif, GXPG, is most likely to be 4-hydroxy as this fits the requirement for 4-hydroxylation in vertebrates.

The protein localises to the secreted. Calcium-dependent lectin involved in innate immune defense. Binds mannose, fucose and N-acetylglucosamine on different microorganisms and activates the lectin complement pathway. Binds to late apoptotic cells, as well as to apoptotic blebs and to necrotic cells, but not to early apoptotic cells, facilitating their uptake by macrophages. The polypeptide is Mannose-binding protein C (MBL2) (Gorilla gorilla gorilla (Western lowland gorilla)).